The following is a 522-amino-acid chain: Penicillin-sensitive carboxypeptidase A (522 aa).

Serine 94 (acyl-ester intermediate) is an active-site residue. The active-site Proton acceptor is the lysine 97. Serine 351 is an active-site residue. Lysine 461 serves as a coordination point for substrate.

It belongs to the peptidase S13 family.

It catalyses the reaction Preferential cleavage: (Ac)2-L-Lys-D-Ala-|-D-Ala. Also transpeptidation of peptidyl-alanyl moieties that are N-acyl substituents of D-alanine.. Its activity is regulated as follows. Inhibited by penicillin G. Its function is as follows. Carboxypeptidase. The chain is Penicillin-sensitive carboxypeptidase A (pscA) from Dictyostelium discoideum (Social amoeba).